The primary structure comprises 728 residues: Glutamate--cysteine ligase (728 aa).

Positions proline 517–valine 552 are disordered. A compositionally biased stretch (low complexity) spans arginine 523–threonine 536.

This sequence belongs to the glutamate--cysteine ligase type 3 family.

It catalyses the reaction L-cysteine + L-glutamate + ATP = gamma-L-glutamyl-L-cysteine + ADP + phosphate + H(+). The protein operates within sulfur metabolism; glutathione biosynthesis; glutathione from L-cysteine and L-glutamate: step 1/2. The protein is Glutamate--cysteine ligase (gcs-1) of Neurospora crassa (strain ATCC 24698 / 74-OR23-1A / CBS 708.71 / DSM 1257 / FGSC 987).